A 283-amino-acid polypeptide reads, in one-letter code: Thymidylate synthase (283 aa).

Residue Arg-22 participates in dUMP binding. Catalysis depends on Cys-160, which acts as the Nucleophile. DUMP-binding positions include 180–183 (RSCD), Asn-191, and 221–223 (HIY). Asp-183 lines the (6R)-5,10-methylene-5,6,7,8-tetrahydrofolate pocket. Residue Ser-282 participates in (6R)-5,10-methylene-5,6,7,8-tetrahydrofolate binding.

It belongs to the thymidylate synthase family. Bacterial-type ThyA subfamily. Homodimer.

Its subcellular location is the cytoplasm. It catalyses the reaction dUMP + (6R)-5,10-methylene-5,6,7,8-tetrahydrofolate = 7,8-dihydrofolate + dTMP. It participates in pyrimidine metabolism; dTTP biosynthesis. Its function is as follows. Catalyzes the reductive methylation of 2'-deoxyuridine-5'-monophosphate (dUMP) to 2'-deoxythymidine-5'-monophosphate (dTMP) while utilizing 5,10-methylenetetrahydrofolate (mTHF) as the methyl donor and reductant in the reaction, yielding dihydrofolate (DHF) as a by-product. This enzymatic reaction provides an intracellular de novo source of dTMP, an essential precursor for DNA biosynthesis. The chain is Thymidylate synthase from Actinobacillus succinogenes (strain ATCC 55618 / DSM 22257 / CCUG 43843 / 130Z).